The following is a 455-amino-acid chain: MGLSVIILAAGQGKRMASSTPKILHPLGGIPLLERVVNTARLLNPHTIHVVYGNGGSHVREKLNYLPVHWIEQSQQLGTGHAVLQAIPFCQNEDRVLILYGDVPLISPKTLNSLLENTPSNGLGVVVAELPDPTGLGRIIRDDFGNILSIVEHKDVAEHQLKIREINTGIMTTTAMNLKKWLPQLNNNNCQKEYYLTDTVALAVAEGCPVGGVAAQCCEEVQGVNDRWELTKLERYYQRLMAKKLSLAGVTIIDPERFDARGENIEIAPDVVIDVNVILEGNVQLDRNVRIGPNVILKNTTVGENTEIHANSVIEAAVIKANCSVGPFARLRPGSVLEEGAKVGNFVEMKKTTLGRGSKANHLTYLGDTIIGKNVNVGAGTITCNYDGANKWQTKIEDGAFIGSNVALVAPLTVGKNATIGAGSTLSQDAPPDQLTVARERQRTIKGWHRPTKKE.

Residues 1–227 (MGLSVIILAA…CEEVQGVNDR (227 aa)) form a pyrophosphorylase region. UDP-N-acetyl-alpha-D-glucosamine-binding positions include 8 to 11 (LAAG), lysine 22, glutamine 73, 78 to 79 (GT), 100 to 102 (YGD), glycine 137, glutamate 152, asparagine 167, and asparagine 225. Aspartate 102 contacts Mg(2+). Position 225 (asparagine 225) interacts with Mg(2+). The tract at residues 228-248 (WELTKLERYYQRLMAKKLSLA) is linker. The tract at residues 249–455 (GVTIIDPERF…KGWHRPTKKE (207 aa)) is N-acetyltransferase. UDP-N-acetyl-alpha-D-glucosamine is bound by residues arginine 332 and lysine 350. The active-site Proton acceptor is histidine 362. Residues tyrosine 365 and asparagine 376 each contribute to the UDP-N-acetyl-alpha-D-glucosamine site. Acetyl-CoA contacts are provided by residues alanine 379, 385–386 (NY), serine 404, alanine 422, and arginine 439.

It in the N-terminal section; belongs to the N-acetylglucosamine-1-phosphate uridyltransferase family. The protein in the C-terminal section; belongs to the transferase hexapeptide repeat family. As to quaternary structure, homotrimer. Mg(2+) serves as cofactor.

The protein localises to the cytoplasm. It catalyses the reaction alpha-D-glucosamine 1-phosphate + acetyl-CoA = N-acetyl-alpha-D-glucosamine 1-phosphate + CoA + H(+). The enzyme catalyses N-acetyl-alpha-D-glucosamine 1-phosphate + UTP + H(+) = UDP-N-acetyl-alpha-D-glucosamine + diphosphate. It functions in the pathway nucleotide-sugar biosynthesis; UDP-N-acetyl-alpha-D-glucosamine biosynthesis; N-acetyl-alpha-D-glucosamine 1-phosphate from alpha-D-glucosamine 6-phosphate (route II): step 2/2. Its pathway is nucleotide-sugar biosynthesis; UDP-N-acetyl-alpha-D-glucosamine biosynthesis; UDP-N-acetyl-alpha-D-glucosamine from N-acetyl-alpha-D-glucosamine 1-phosphate: step 1/1. It participates in bacterial outer membrane biogenesis; LPS lipid A biosynthesis. In terms of biological role, catalyzes the last two sequential reactions in the de novo biosynthetic pathway for UDP-N-acetylglucosamine (UDP-GlcNAc). The C-terminal domain catalyzes the transfer of acetyl group from acetyl coenzyme A to glucosamine-1-phosphate (GlcN-1-P) to produce N-acetylglucosamine-1-phosphate (GlcNAc-1-P), which is converted into UDP-GlcNAc by the transfer of uridine 5-monophosphate (from uridine 5-triphosphate), a reaction catalyzed by the N-terminal domain. In Coxiella burnetii (strain Dugway 5J108-111), this protein is Bifunctional protein GlmU.